A 151-amino-acid chain; its full sequence is Homeobox protein HD-1 (151 aa).

The segment at residues 87 to 146 (ESIKSRRFPKFITEALERSFEIDQYPSEAEKARLAKICKLSTKQINNWFTNKRNRTKGHE) is a DNA-binding region (homeobox).

The protein resides in the nucleus. This is Homeobox protein HD-1 (HD-1) from Encephalitozoon cuniculi (strain GB-M1) (Microsporidian parasite).